Here is a 605-residue protein sequence, read N- to C-terminus: Conglutin beta 7 (605 aa).

Residues 1–30 form the signal peptide; the sequence is MARMRVRFPTLVLLLGILFLMAVSIGIAYG. Over residues 37–105 the composition is skewed to basic and acidic residues; it reads NHERPGEREH…REPCREREQE (69 aa). 3 disordered regions span residues 37–193, 346–367, and 382–405; these read NHER…RFQT, LGNE…SYQD, and LRKH…NLRS. Low complexity predominate over residues 140 to 149; sequence QGSSSSSRKQ. The span at 150 to 179 shows a compositional bias: basic and acidic residues; the sequence is SGYERRQYHERREQRDEKEKEQDSRSDSRR. In terms of domain architecture, Cupin type-1 1 spans 184 to 342; that stretch reads YHFSSERFQT…TFNTRYEEIQ (159 aa). The Cupin type-1 2 domain maps to 401 to 563; the sequence is FNLRSNESIY…TFPGSAQDVE (163 aa). Asn406 and Asn513 each carry an N-linked (GlcNAc...) asparagine glycan. Residues 574–593 are disordered; that stretch reads FANAQPQQKQQREKEGRRGR.

It belongs to the 7S seed storage protein family. As to quaternary structure, component of globulins complexes which accumulate in seeds.

Its function is as follows. Seed storage protein. Accumulates during seed development and is hydrolyzed after germination to provide a carbon and nitrogen source for the developing seedling. This chain is Conglutin beta 7, found in Lupinus angustifolius (Narrow-leaved blue lupine).